The primary structure comprises 53 residues: Serine rich endogenous peptide 3 (53 aa).

An N-terminal signal peptide occupies residues 1–26; it reads MTKKGPLNLRLLLLLLVVLLPSCSNC. The short motif at 37 to 53 is the SCOOP motif element; the sequence is SSEWRRKMITVWSKSSY. The SxS motif essential for MIK2 binding signature appears at 49–51; it reads SKS.

It belongs to the serine rich endogenous peptide (SCOOP) phytocytokine family. In terms of assembly, interacts with MIK2 (via extracellular leucine-rich repeat domain); this interaction triggers the formation of complex between MIK2 and the BAK1/SERK3 and SERK4 coreceptors, and subsequent BAK1 activation by phosphorylation.

Its subcellular location is the cell membrane. The protein localises to the secreted. The protein resides in the extracellular space. It is found in the apoplast. Brassicaceae-specific phytocytokine (plant endogenous peptide released into the apoplast) perceived by MIK2 in a BAK1/SERK3 and SERK4 coreceptors-dependent manner, that modulates various physiological and antimicrobial processes including growth prevention and reactive oxygen species (ROS) response regulation. This Arabidopsis thaliana (Mouse-ear cress) protein is Serine rich endogenous peptide 3.